The chain runs to 30 residues: Bowman-Birk type proteinase inhibitor 3 (30 aa).

Intrachain disulfides connect C9-C24 and C14-C22.

Functionally, inhibits trypsin (IC(50)=4.90 nM) and, to a lesser extent, alpha-chymotrypsin (IC(50)=1.87 uM). The protein is Bowman-Birk type proteinase inhibitor 3 of Lathyrus sativus (White vetchling).